A 93-amino-acid chain; its full sequence is Small ribosomal subunit protein uS19 (93 aa).

This sequence belongs to the universal ribosomal protein uS19 family.

Functionally, protein S19 forms a complex with S13 that binds strongly to the 16S ribosomal RNA. The protein is Small ribosomal subunit protein uS19 of Arthrobacter sp. (strain FB24).